Consider the following 95-residue polypeptide: Large ribosomal subunit protein eL37z (95 aa).

Residues C19, C22, C34, and C37 each coordinate Zn(2+). A C4-type zinc finger spans residues 19 to 37 (CVRCGRRSFHIQKSRCSAC).

Belongs to the eukaryotic ribosomal protein eL37 family. It depends on Zn(2+) as a cofactor.

Functionally, binds to the 23S rRNA. The polypeptide is Large ribosomal subunit protein eL37z (RPL37A) (Arabidopsis thaliana (Mouse-ear cress)).